We begin with the raw amino-acid sequence, 391 residues long: Beta sliding clamp (391 aa).

Belongs to the beta sliding clamp family. As to quaternary structure, forms a ring-shaped head-to-tail homodimer around DNA which binds and tethers DNA polymerases and other proteins to the DNA. The DNA replisome complex has a single clamp-loading complex (3 tau and 1 each of delta, delta', psi and chi subunits) which binds 3 Pol III cores (1 core on the leading strand and 2 on the lagging strand) each with a beta sliding clamp dimer. Additional proteins in the replisome are other copies of gamma, psi and chi, Ssb, DNA helicase and RNA primase.

Its subcellular location is the cytoplasm. Functionally, confers DNA tethering and processivity to DNA polymerases and other proteins. Acts as a clamp, forming a ring around DNA (a reaction catalyzed by the clamp-loading complex) which diffuses in an ATP-independent manner freely and bidirectionally along dsDNA. Initially characterized for its ability to contact the catalytic subunit of DNA polymerase III (Pol III), a complex, multichain enzyme responsible for most of the replicative synthesis in bacteria; Pol III exhibits 3'-5' exonuclease proofreading activity. The beta chain is required for initiation of replication as well as for processivity of DNA replication. The protein is Beta sliding clamp (dnaN) of Synechocystis sp. (strain ATCC 27184 / PCC 6803 / Kazusa).